We begin with the raw amino-acid sequence, 837 residues long: MSQTGSHPGRGLAGRWLWGAQPCLLLPIVPLSWLVWLLLLLLASLLPSARLASPLPREEEIVFPEKLNGSVLPGSGAPARLLCRLQAFGETLLLELEHDSGVQVEGLTVQYLGQAPELLGGAEPGTYLTGTINGEPESVASLHWDGGALLGVLQYRGAELHLQPLEGGTPNSAGGPGAHILRRKSPASGQGPMCNVKAPLGSPSPRPRRAKRFASLSRFVETLVVADDKMAAFHGAGLKRYLLTVMAAAAKAFKHPSIRNPVSLVVTRLVILGSGEEGPQVGPSAAQTLRSFCAWQRGLNTPEDSDPDHFDTAILFTRQDLCGVSTCDTLGMADVGTVCDPARSCAIVEDDGLQSAYTAAHELGHVFNMLHDNSKPCISLNGPLSTSRHVMAPVMAHVDPEEPWSPCSARFITDFLDNGYGHCLLDKPEAPLHLPVTFPGKDYDADRQCQLTFGPDSRHCPQLPPPCAALWCSGHLNGHAMCQTKHSPWADGTPCGPAQACMGGRCLHMDQLQDFNIPQAGGWGPWGPWGDCSRTCGGGVQFSSRDCTRPVPRNGGKYCEGRRTRFRSCNTEDCPTGSVLTFREEQCAAYNHCTDLFKSFPGPMDWVPRYTGVAPQDQCKLTCQARALGYYYVLEPRVVDGTPCSPDSSSVCVQGRCIHAGCDRIIGSKKKFDKCMVCGGDGSGCSKQSGSFRKFRYGYNNVVTIPTGATHILVRQQGNPGHRSIYLALKLPDGSYALNGEYTLMPSPTDVVLPGAISLRYSGATAASETLSGHGPLAQPLTLQVLVAGNPQDARLRYSFFVPRPTPSTPHPTPQDWLHRRAQILEILRRRPWVGRK.

An N-terminal signal peptide occupies residues 1 to 51 (MSQTGSHPGRGLAGRWLWGAQPCLLLPIVPLSWLVWLLLLLLASLLPSARL). Positions 52–212 (ASPLPREEEI…PSPRPRRAKR (161 aa)) are excised as a propeptide. Asparagine 68 carries an N-linked (GlcNAc...) asparagine glycan. The tract at residues 166–191 (EGGTPNSAGGPGAHILRRKSPASGQG) is disordered. A Cysteine switch motif is present at residues 192–199 (PMCNVKAP). Cysteine 194 is a binding site for Zn(2+). Residues 218–428 (RFVETLVVAD…GYGHCLLDKP (211 aa)) form the Peptidase M12B domain. 11 disulfide bridges follow: cysteine 293-cysteine 345, cysteine 322-cysteine 327, cysteine 339-cysteine 423, cysteine 377-cysteine 407, cysteine 449-cysteine 472, cysteine 460-cysteine 482, cysteine 467-cysteine 501, cysteine 495-cysteine 506, cysteine 532-cysteine 569, cysteine 536-cysteine 574, and cysteine 547-cysteine 559. Residue histidine 361 participates in Zn(2+) binding. Residue glutamate 362 is part of the active site. Residues histidine 365 and histidine 371 each contribute to the Zn(2+) site. Residues 437 to 519 (TFPGKDYDAD…DQLQDFNIPQ (83 aa)) form the Disintegrin domain. Positions 520 to 575 (AGGWGPWGPWGDCSRTCGGGVQFSSRDCTRPVPRNGGKYCEGRRTRFRSCNTEDCP) constitute a TSP type-1 domain. The spacer stretch occupies residues 686–837 (SKQSGSFRKF…LRRRPWVGRK (152 aa)).

As to quaternary structure, interacts with SRPX2. The cofactor is Zn(2+). Post-translationally, the precursor is cleaved by a furin endopeptidase. In terms of processing, glycosylated. Can be O-fucosylated by POFUT2 on a serine or a threonine residue found within the consensus sequence C1-X(2)-(S/T)-C2-G of the TSP type-1 repeat domains where C1 and C2 are the first and second cysteine residue of the repeat, respectively. Fucosylated repeats can then be further glycosylated by the addition of a beta-1,3-glucose residue by the glucosyltransferase, B3GALTL. Fucosylation mediates the efficient secretion of ADAMTS family members. Can also be C-glycosylated with one or two mannose molecules on tryptophan residues within the consensus sequence W-X-X-W of the TPRs, and N-glycosylated. These other glycosylations can also facilitate secretion.

It localises to the secreted. The protein resides in the extracellular space. It is found in the extracellular matrix. The enzyme catalyses Glutamyl endopeptidase. Bonds cleaved include 370-Thr-Glu-Gly-Glu-|-Ala-Arg-Gly-Ser-377 in the interglobular domain of mammalian aggrecan.. Its function is as follows. Cleaves aggrecan, a cartilage proteoglycan, at the '392-Glu-|-Ala-393' site and may be involved in its turnover. Also cleaves COMP. May play an important role in the destruction of aggrecan in arthritic diseases. The protein is A disintegrin and metalloproteinase with thrombospondin motifs 4 (ADAMTS4) of Pongo abelii (Sumatran orangutan).